The following is a 417-amino-acid chain: MKSKSMCTTVGLIAMCLAGSAAAAGKPLYQTGPALSRSAAATATAEPSLQRVLSSPSTANAQVVQIDAGAVAPAEKLLELQLDGQTITATQAKVDALEGGDSIWYGNLGPRAGTRARTLSGVDPLNSAILVRSGDTVTGTIRYAGKLYRLRPLADGRHVLVQVDEQRMPQEHPAEYSLLPKFDMPNDGRVTAAQASSGSPATIRVLVVATNQAVTAYGGNMQSLVQLAVAEANQGYVNSNVGITLQLARYETTSYAETGNFTTDLQRFRVTNDGYMDSIHTSRNTYTADVGVIVLNNSSYCGLASGIGSTAATAFASVYWDCATGYYSFAHEIGHLQSARHDAATDPSTSPFAYGHGYRYGNSWRTIMAYACPSGCPRLNYWSNPNISYNGVPMGNASTADNQRVLVNTKANIAAFR.

Positions 1–23 are cleaved as a signal peptide; the sequence is MKSKSMCTTVGLIAMCLAGSAAA. Histidine 331 is a binding site for Zn(2+). Glutamate 332 is an active-site residue. Residues histidine 335 and histidine 341 each coordinate Zn(2+).

Belongs to the peptidase M72 family. The cofactor is Zn(2+).

The enzyme catalyses Cleavage of Xaa-|-Asp, Xaa-|-Glu and Xaa-|-cysteic acid bonds.. Functionally, metalloprotease, specifically cleaves on the N-terminal side of aspartyl, glutamyl and cysteic acid residues. This Xanthomonas campestris pv. campestris (strain ATCC 33913 / DSM 3586 / NCPPB 528 / LMG 568 / P 25) protein is Peptidyl-Asp metalloendopeptidase.